A 435-amino-acid polypeptide reads, in one-letter code: Protein lin-54 (435 aa).

Residues 73–136 form a disordered region; sequence DEPIDTSSHR…PASLPRTVQP (64 aa). The span at 102–120 shows a compositional bias: polar residues; it reads TPGSSQYTVRNLSNLSGSP. The CRC domain maps to 173-288; the sequence is QRKPCNCTKS…KCKGCQNTET (116 aa). The DNA-binding stretch occupies residues 175 to 188; sequence KPCNCTKSQCLKLY. The Zn(2+) site is built by Cys-177, Cys-179, Cys-184, Cys-189, Cys-191, Cys-198, Cys-201, Cys-203, and Cys-206. A linker region spans residues 235–250; the sequence is IGIARGGITDIERLHQ. Positions 253, 255, 260, 265, 267, 274, 278, 280, and 283 each coordinate Zn(2+). The segment at 253 to 266 is DNA-binding; it reads CHCKKSGCLKNYCE. Residues 415 to 435 are disordered; it reads LTQDLDAAPTDDIPGPSTSTS.

It belongs to the lin-54 family. In terms of assembly, component of the DRM complex, at least composed of lin-9, lin-35, lin-37, lin-52, lin-53, lin-54- dpl-1 and efl-1.

It localises to the nucleus. The protein localises to the chromosome. Its function is as follows. Synthetic multivulva class B (synMuvB) protein. SynMuvB proteins are required to repress the induction of vulval development by Ras signaling and probably act by forming the multiprotein DRM complex that repress transcription. This chain is Protein lin-54, found in Caenorhabditis elegans.